Reading from the N-terminus, the 262-residue chain is Troponin T, slow skeletal muscle (262 aa).

A compositionally biased stretch (acidic residues) spans 1-31; it reads MSDAEEQEYEEEQPEEEEAAEEEEAPEEPEP. 3 disordered regions span residues 1–59, 107–153, and 165–197; these read MSDA…PEGE, RAER…KKKV, and LVKAEQKRGKRQTGREMKQRILSERKKPLNIDH. Serine 2 carries the post-translational modification Phosphoserine; by CK2. Positions 32–41 are enriched in basic and acidic residues; the sequence is VAEREEERPK. Residues 43–55 show a composition bias toward pro residues; sequence SRPVVPPLIPPKI. 2 stretches are compositionally biased toward basic and acidic residues: residues 107-149 and 177-197; these read RAER…DDAK and TGREMKQRILSERKKPLNIDH.

The protein belongs to the troponin T family. In terms of assembly, interacts with TPM3.

In terms of biological role, troponin T is the tropomyosin-binding subunit of troponin, the thin filament regulatory complex which confers calcium-sensitivity to striated muscle actomyosin ATPase activity. The chain is Troponin T, slow skeletal muscle (TNNT1) from Sus scrofa (Pig).